Consider the following 148-residue polypeptide: Puroindoline-A (148 aa).

The first 19 residues, 1 to 19 (MKALFLIGLLALVASTAFA), serve as a signal peptide directing secretion. Residues 20-28 (QYSEVVGSY) constitute a propeptide that is removed on maturation. Positions 147-148 (YW) are cleaved as a propeptide — removed in mature form.

Post-translationally, five disulfide bonds are present. As to expression, endosperm and aleurone layer of developing kernels. In the aleurone layer, mainly localized to starch granules and the surface of the plasma membrane, forming a uniform layer, also abundant in the intercellular space. In the endosperm, mainly localized to starch granules and the plasma membrane, but less abundant in the intercellular space. Not found in roots or coleoptiles.

It is found in the membrane. It localises to the secreted. The protein resides in the extracellular space. Acts as a membranotoxin, probably through its antibacterial and antifungal activities, contributing to the defense mechanism of the plant against predators. Forms monovalent cation-selective ion channels in membranes. Has antibacterial activity against the Gram-positive bacteria S.aureus and C.michiganensis, and the Gram-negative bacteria E.coli, P.syringae pv phaseoli, A.tumefaciens and E.carotovora subsp carotovora. Acts synergistically with PINB against bacteria. Contributes to grain texture and hardness. The protein is Puroindoline-A (PINA) of Triticum aestivum (Wheat).